A 289-amino-acid chain; its full sequence is Syntaxin-3 (289 aa).

Residues 1–263 (MKDRLEQLKA…VKYQSQARKK (263 aa)) lie on the Cytoplasmic side of the membrane. Positions 32-111 (MDEFFSEIEE…IEEDEVRSSA (80 aa)) form a coiled coil. The region spanning 191 to 253 (LSEIEGRHKD…EKARDETKKA (63 aa)) is the t-SNARE coiled-coil homology domain. Residues 264-284 (LIIIIVLVVVLLGILALIIGL) traverse the membrane as a helical; Anchor for type IV membrane protein segment. The Extracellular portion of the chain corresponds to 285–289 (SVGLN).

The protein belongs to the syntaxin family. In terms of assembly, interacts with REEP6. Interacts with PRPH2 in rod and cone photoreceptors. Interacts with ROM1. Interacts with SNAP25. Interacts with VAMP2. Interacts with IPO5. As to expression, expressed in small intestine, kidney, pancreas, placenta as well as in retina. Weaker expression in lung, liver and heart. Not expressed in brain and skeletal muscle. In terms of tissue distribution, expressed only in the retina. Ubiquitously expressed.

The protein localises to the apical cell membrane. It localises to the nucleus. Its function is as follows. Potentially involved in docking of synaptic vesicles at presynaptic active zones. Apical receptor involved in membrane fusion of apical vesicles. Essential for survival of retinal photoreceetors. In terms of biological role, functions as a regulator of gene expression. This Homo sapiens (Human) protein is Syntaxin-3 (STX3).